We begin with the raw amino-acid sequence, 218 residues long: Adenylate kinase (218 aa).

Residue 10–15 participates in ATP binding; sequence GAGKGT. Positions 30–59 are NMP; sequence STGDMLRAAVKAQSELGMAAKKVMDEGGLV. Residues Thr31, Arg36, 57 to 59, 85 to 88, and Gln92 contribute to the AMP site; these read GLV and GFPR. The LID stretch occupies residues 122–159; sequence GRRVHPASGRTYHIVFNPPAVEGKDDVTGEDLVQRDDD. ATP is bound by residues Arg123 and 132 to 133; that span reads TY. The AMP site is built by Arg156 and Arg167. Gly203 is a binding site for ATP.

The protein belongs to the adenylate kinase family. In terms of assembly, monomer.

The protein resides in the cytoplasm. The catalysed reaction is AMP + ATP = 2 ADP. The protein operates within purine metabolism; AMP biosynthesis via salvage pathway; AMP from ADP: step 1/1. In terms of biological role, catalyzes the reversible transfer of the terminal phosphate group between ATP and AMP. Plays an important role in cellular energy homeostasis and in adenine nucleotide metabolism. The protein is Adenylate kinase of Chlorobaculum parvum (strain DSM 263 / NCIMB 8327) (Chlorobium vibrioforme subsp. thiosulfatophilum).